Reading from the N-terminus, the 386-residue chain is Succinate--CoA ligase [ADP-forming] subunit beta (386 aa).

An ATP-grasp domain is found at Lys9–Asp244. Residues Lys46, Gly53 to Gly55, Glu99, Ser102, and Glu107 contribute to the ATP site. Mg(2+) is bound by residues Asn199 and Asp213. Residues Asn264 and Gly321–Met323 each bind substrate.

This sequence belongs to the succinate/malate CoA ligase beta subunit family. Heterotetramer of two alpha and two beta subunits. Requires Mg(2+) as cofactor.

The enzyme catalyses succinate + ATP + CoA = succinyl-CoA + ADP + phosphate. It catalyses the reaction GTP + succinate + CoA = succinyl-CoA + GDP + phosphate. It functions in the pathway carbohydrate metabolism; tricarboxylic acid cycle; succinate from succinyl-CoA (ligase route): step 1/1. In terms of biological role, succinyl-CoA synthetase functions in the citric acid cycle (TCA), coupling the hydrolysis of succinyl-CoA to the synthesis of either ATP or GTP and thus represents the only step of substrate-level phosphorylation in the TCA. The beta subunit provides nucleotide specificity of the enzyme and binds the substrate succinate, while the binding sites for coenzyme A and phosphate are found in the alpha subunit. The chain is Succinate--CoA ligase [ADP-forming] subunit beta from Pelagibacter ubique (strain HTCC1062).